The sequence spans 718 residues: Polyribonucleotide nucleotidyltransferase (718 aa).

Mg(2+) is bound by residues aspartate 493 and aspartate 499. Residues proline 560–isoleucine 619 enclose the KH domain. Residues glycine 629 to lysine 697 form the S1 motif domain. A disordered region spans residues serine 695–threonine 718. Residues alanine 699–threonine 718 are compositionally biased toward basic and acidic residues.

Belongs to the polyribonucleotide nucleotidyltransferase family. Requires Mg(2+) as cofactor.

It is found in the cytoplasm. It catalyses the reaction RNA(n+1) + phosphate = RNA(n) + a ribonucleoside 5'-diphosphate. Its function is as follows. Involved in mRNA degradation. Catalyzes the phosphorolysis of single-stranded polyribonucleotides processively in the 3'- to 5'-direction. The sequence is that of Polyribonucleotide nucleotidyltransferase from Natranaerobius thermophilus (strain ATCC BAA-1301 / DSM 18059 / JW/NM-WN-LF).